We begin with the raw amino-acid sequence, 568 residues long: Sulfite reductase [NADPH] hemoprotein beta-component (568 aa).

[4Fe-4S] cluster-binding residues include Cys-425, Cys-431, Cys-470, and Cys-474. Cys-474 contacts siroheme.

It belongs to the nitrite and sulfite reductase 4Fe-4S domain family. In terms of assembly, alpha(8)-beta(8). The alpha component is a flavoprotein, the beta component is a hemoprotein. Siroheme is required as a cofactor. The cofactor is [4Fe-4S] cluster.

The enzyme catalyses hydrogen sulfide + 3 NADP(+) + 3 H2O = sulfite + 3 NADPH + 4 H(+). It functions in the pathway sulfur metabolism; hydrogen sulfide biosynthesis; hydrogen sulfide from sulfite (NADPH route): step 1/1. Component of the sulfite reductase complex that catalyzes the 6-electron reduction of sulfite to sulfide. This is one of several activities required for the biosynthesis of L-cysteine from sulfate. The chain is Sulfite reductase [NADPH] hemoprotein beta-component from Xanthomonas euvesicatoria pv. vesicatoria (strain 85-10) (Xanthomonas campestris pv. vesicatoria).